The following is a 198-amino-acid chain: Ribonuclease HII (198 aa).

The 196-residue stretch at 3–198 (FLEGGVDEAG…SWRTLRGESP (196 aa)) folds into the RNase H type-2 domain. 3 residues coordinate a divalent metal cation: Asp-9, Glu-10, and Asp-104.

This sequence belongs to the RNase HII family. The cofactor is Mn(2+). Mg(2+) serves as cofactor.

It is found in the cytoplasm. The enzyme catalyses Endonucleolytic cleavage to 5'-phosphomonoester.. In terms of biological role, endonuclease that specifically degrades the RNA of RNA-DNA hybrids. In Pyrobaculum neutrophilum (strain DSM 2338 / JCM 9278 / NBRC 100436 / V24Sta) (Thermoproteus neutrophilus), this protein is Ribonuclease HII.